We begin with the raw amino-acid sequence, 508 residues long: Light-independent protochlorophyllide reductase subunit B (508 aa).

Position 36 (Asp36) interacts with [4Fe-4S] cluster. The active-site Proton donor is Asp294. Residue 429–430 (GM) participates in substrate binding.

The protein belongs to the ChlB/BchB/BchZ family. Protochlorophyllide reductase is composed of three subunits; ChlL, ChlN and ChlB. Forms a heterotetramer of two ChlB and two ChlN subunits. The cofactor is [4Fe-4S] cluster.

The enzyme catalyses chlorophyllide a + oxidized 2[4Fe-4S]-[ferredoxin] + 2 ADP + 2 phosphate = protochlorophyllide a + reduced 2[4Fe-4S]-[ferredoxin] + 2 ATP + 2 H2O. The protein operates within porphyrin-containing compound metabolism; chlorophyll biosynthesis (light-independent). In terms of biological role, component of the dark-operative protochlorophyllide reductase (DPOR) that uses Mg-ATP and reduced ferredoxin to reduce ring D of protochlorophyllide (Pchlide) to form chlorophyllide a (Chlide). This reaction is light-independent. The NB-protein (ChlN-ChlB) is the catalytic component of the complex. This is Light-independent protochlorophyllide reductase subunit B from Trichormus variabilis (strain ATCC 29413 / PCC 7937) (Anabaena variabilis).